The sequence spans 358 residues: Trace amine-associated receptor 7d (358 aa).

Topologically, residues 1–47 (MRVDDDRFPWDQDSILSRDLLSASSLQLCYENLNRSCVRSPYSPGPR) are extracellular. N-linked (GlcNAc...) asparagine glycosylation is present at Asn-34. 2 disulfide bridges follow: Cys-37–Cys-201 and Cys-120–Cys-205. Residues 48-68 (LILYAVFGFGAVLAVCGNLMV) traverse the membrane as a helical segment. Over 69–83 (MTSILHFRQLHSPAN) the chain is Cytoplasmic. A helical transmembrane segment spans residues 84 to 104 (FLVASLACADFLVGLTVMPFS). The Extracellular segment spans residues 105–122 (MVRSVEGCWYFGDTYCKL). The helical transmembrane segment at 123 to 143 (HTCFDVSFCYCSLFHLCFISV) threads the bilayer. The Cytoplasmic segment spans residues 144-166 (DRYIAVSDPLIYPTRFTASVSGK). The helical transmembrane segment at 167 to 187 (CITFSWLLSIIYGFPLIYTGA) threads the bilayer. Residues 188 to 212 (SEAGLEDLVSALTCVGGCQIPMNQK) lie on the Extracellular side of the membrane. The chain crosses the membrane as a helical span at residues 213-233 (FVLINFLLFLVPTLVMMTVYS). Residues 234–274 (KIFLIARQQAQNIEKMRKQTARASESYKDRVCKRERKAAKT) lie on the Cytoplasmic side of the membrane. The chain crosses the membrane as a helical span at residues 275–295 (LGIAVAAFLLSWLPYFIDSII). The Extracellular portion of the chain corresponds to 296-309 (DAFLGFITPTYVYE). A helical transmembrane segment spans residues 310–333 (ILIWIVYYNSSMNPLIYAFFYPWF). Over 334–358 (RKATKLIVTGKILRENSSTINLFPE) the chain is Cytoplasmic.

The protein belongs to the G-protein coupled receptor 1 family.

The protein localises to the cell membrane. Its function is as follows. Olfactory receptor specific for N,N-dimethylalkylamines trace amines, such as N,N-dimethylcyclohexylamine. Trace amine compounds are enriched in animal body fluids and act on trace amine-associated receptors (TAARs) to elicit both intraspecific and interspecific innate behaviors. Ligand-binding causes a conformation change that triggers signaling via G(s)-class of G alpha proteins (GNAL or GNAS). The sequence is that of Trace amine-associated receptor 7d from Rattus norvegicus (Rat).